Consider the following 319-residue polypeptide: Lipoyl synthase (319 aa).

The disordered stretch occupies residues 1–24; sequence MAVVIDTVGARPRHPEKQANPDTP. The span at 13–24 shows a compositional bias: basic and acidic residues; that stretch reads RHPEKQANPDTP. Cys58, Cys63, Cys69, Cys84, Cys88, Cys91, and Ser298 together coordinate [4Fe-4S] cluster. The region spanning 70–287 is the Radical SAM core domain; that stretch reads WDKSHATFMI…EEIARAKGFL (218 aa).

Belongs to the radical SAM superfamily. Lipoyl synthase family. Requires [4Fe-4S] cluster as cofactor.

It localises to the cytoplasm. The enzyme catalyses [[Fe-S] cluster scaffold protein carrying a second [4Fe-4S](2+) cluster] + N(6)-octanoyl-L-lysyl-[protein] + 2 oxidized [2Fe-2S]-[ferredoxin] + 2 S-adenosyl-L-methionine + 4 H(+) = [[Fe-S] cluster scaffold protein] + N(6)-[(R)-dihydrolipoyl]-L-lysyl-[protein] + 4 Fe(3+) + 2 hydrogen sulfide + 2 5'-deoxyadenosine + 2 L-methionine + 2 reduced [2Fe-2S]-[ferredoxin]. Its pathway is protein modification; protein lipoylation via endogenous pathway; protein N(6)-(lipoyl)lysine from octanoyl-[acyl-carrier-protein]: step 2/2. In terms of biological role, catalyzes the radical-mediated insertion of two sulfur atoms into the C-6 and C-8 positions of the octanoyl moiety bound to the lipoyl domains of lipoate-dependent enzymes, thereby converting the octanoylated domains into lipoylated derivatives. The protein is Lipoyl synthase of Phenylobacterium zucineum (strain HLK1).